A 711-amino-acid chain; its full sequence is Ribosomal RNA large subunit methyltransferase K/L (711 aa).

One can recognise a THUMP domain in the interval 42–153 (DAQRAVLWSR…KGRATISVDL (112 aa)).

It belongs to the methyltransferase superfamily. RlmKL family.

The protein resides in the cytoplasm. The enzyme catalyses guanosine(2445) in 23S rRNA + S-adenosyl-L-methionine = N(2)-methylguanosine(2445) in 23S rRNA + S-adenosyl-L-homocysteine + H(+). It catalyses the reaction guanosine(2069) in 23S rRNA + S-adenosyl-L-methionine = N(2)-methylguanosine(2069) in 23S rRNA + S-adenosyl-L-homocysteine + H(+). Its function is as follows. Specifically methylates the guanine in position 2445 (m2G2445) and the guanine in position 2069 (m7G2069) of 23S rRNA. In Xanthomonas campestris pv. campestris (strain 8004), this protein is Ribosomal RNA large subunit methyltransferase K/L.